The chain runs to 163 residues: Crossover junction endodeoxyribonuclease RuvC (163 aa).

Residues D9, E76, and D148 contribute to the active site. Mg(2+) is bound by residues D9, E76, and D148.

This sequence belongs to the RuvC family. As to quaternary structure, homodimer which binds Holliday junction (HJ) DNA. The HJ becomes 2-fold symmetrical on binding to RuvC with unstacked arms; it has a different conformation from HJ DNA in complex with RuvA. In the full resolvosome a probable DNA-RuvA(4)-RuvB(12)-RuvC(2) complex forms which resolves the HJ. It depends on Mg(2+) as a cofactor.

Its subcellular location is the cytoplasm. The catalysed reaction is Endonucleolytic cleavage at a junction such as a reciprocal single-stranded crossover between two homologous DNA duplexes (Holliday junction).. In terms of biological role, the RuvA-RuvB-RuvC complex processes Holliday junction (HJ) DNA during genetic recombination and DNA repair. Endonuclease that resolves HJ intermediates. Cleaves cruciform DNA by making single-stranded nicks across the HJ at symmetrical positions within the homologous arms, yielding a 5'-phosphate and a 3'-hydroxyl group; requires a central core of homology in the junction. The consensus cleavage sequence is 5'-(A/T)TT(C/G)-3'. Cleavage occurs on the 3'-side of the TT dinucleotide at the point of strand exchange. HJ branch migration catalyzed by RuvA-RuvB allows RuvC to scan DNA until it finds its consensus sequence, where it cleaves and resolves the cruciform DNA. This chain is Crossover junction endodeoxyribonuclease RuvC, found in Trichodesmium erythraeum (strain IMS101).